The chain runs to 335 residues: Putative peroxisomal biogenesis factor 19 (335 aa).

2 disordered regions span residues Leu14–Asp70 and Tyr104–Glu124. Low complexity-rich tracts occupy residues Pro22 to Ile55 and Asn109 to Gly119.

Belongs to the peroxin-19 family.

It is found in the peroxisome. The polypeptide is Putative peroxisomal biogenesis factor 19 (pex19) (Dictyostelium discoideum (Social amoeba)).